Here is a 158-residue protein sequence, read N- to C-terminus: 6,7-dimethyl-8-ribityllumazine synthase (158 aa).

5-amino-6-(D-ribitylamino)uracil-binding positions include Phe-22, 57-59 (AVE), and 81-83 (AVI). 86–87 (GT) provides a ligand contact to (2S)-2-hydroxy-3-oxobutyl phosphate. Catalysis depends on His-89, which acts as the Proton donor. Phe-114 is a binding site for 5-amino-6-(D-ribitylamino)uracil. (2S)-2-hydroxy-3-oxobutyl phosphate is bound at residue Arg-128.

It belongs to the DMRL synthase family. Forms an icosahedral capsid composed of 60 subunits, arranged as a dodecamer of pentamers.

It catalyses the reaction (2S)-2-hydroxy-3-oxobutyl phosphate + 5-amino-6-(D-ribitylamino)uracil = 6,7-dimethyl-8-(1-D-ribityl)lumazine + phosphate + 2 H2O + H(+). It functions in the pathway cofactor biosynthesis; riboflavin biosynthesis; riboflavin from 2-hydroxy-3-oxobutyl phosphate and 5-amino-6-(D-ribitylamino)uracil: step 1/2. In terms of biological role, catalyzes the formation of 6,7-dimethyl-8-ribityllumazine by condensation of 5-amino-6-(D-ribitylamino)uracil with 3,4-dihydroxy-2-butanone 4-phosphate. This is the penultimate step in the biosynthesis of riboflavin. The chain is 6,7-dimethyl-8-ribityllumazine synthase from Shewanella loihica (strain ATCC BAA-1088 / PV-4).